Reading from the N-terminus, the 352-residue chain is Tropomodulin-3 (352 aa).

S25 bears the Phosphoserine mark.

The protein belongs to the tropomodulin family. Binds to the N-terminus of tropomyosin and to actin. Interacts with FLII. Ubiquitous.

The protein resides in the cytoplasm. It localises to the cytoskeleton. Blocks the elongation and depolymerization of the actin filaments at the pointed end. The Tmod/TM complex contributes to the formation of the short actin protofilament, which in turn defines the geometry of the membrane skeleton. The sequence is that of Tropomodulin-3 (Tmod3) from Mus musculus (Mouse).